A 592-amino-acid polypeptide reads, in one-letter code: Beta-fructofuranosidase, insoluble isoenzyme 2 (592 aa).

The first 40 residues, M1–A40, serve as a signal peptide directing secretion. The active site involves D75. N171, N195, N310, N347, and N568 each carry an N-linked (GlcNAc...) asparagine glycan.

The protein belongs to the glycosyl hydrolase 32 family.

The protein resides in the secreted. It is found in the cell wall. The enzyme catalyses Hydrolysis of terminal non-reducing beta-D-fructofuranoside residues in beta-D-fructofuranosides.. In terms of biological role, may play an important role in phloem unloading and in stress response. This is Beta-fructofuranosidase, insoluble isoenzyme 2 (INV2) from Daucus carota (Wild carrot).